Consider the following 380-residue polypeptide: Glucose-1-phosphate adenylyltransferase (380 aa).

Residues Tyr-100, Gly-165, 180 to 181 (EK), and Ser-191 contribute to the alpha-D-glucose 1-phosphate site.

It belongs to the bacterial/plant glucose-1-phosphate adenylyltransferase family. Homotetramer.

It catalyses the reaction alpha-D-glucose 1-phosphate + ATP + H(+) = ADP-alpha-D-glucose + diphosphate. It functions in the pathway glycan biosynthesis; glycogen biosynthesis. In terms of biological role, involved in the biosynthesis of ADP-glucose, a building block required for the elongation reactions to produce glycogen. Catalyzes the reaction between ATP and alpha-D-glucose 1-phosphate (G1P) to produce pyrophosphate and ADP-Glc. This is Glucose-1-phosphate adenylyltransferase from Clostridium acetobutylicum (strain ATCC 824 / DSM 792 / JCM 1419 / IAM 19013 / LMG 5710 / NBRC 13948 / NRRL B-527 / VKM B-1787 / 2291 / W).